Here is a 539-residue protein sequence, read N- to C-terminus: uncharacterized protein (539 aa).

The interval 34-63 (AASEVSPIPQERPTTSLRKPTPRVQRPATD) is disordered. 11 helical membrane passes run 103–123 (FATP…TTVF), 141–161 (MTAT…LDTV), 184–204 (ILLL…GILL), 244–264 (GIFH…IFLN), 277–299 (FLGA…IIYI), 325–345 (LAVP…LVTF), 360–380 (VLST…AAAA), 399–419 (THVS…ILFL), 434–454 (VVAL…ADNT), 470–490 (IGGV…AIIL), and 496–516 (WGLY…AGVE).

It belongs to the multi antimicrobial extrusion (MATE) (TC 2.A.66.1) family.

The protein resides in the vacuole membrane. This is an uncharacterized protein from Schizosaccharomyces pombe (strain 972 / ATCC 24843) (Fission yeast).